A 172-amino-acid chain; its full sequence is RNA pyrophosphohydrolase (172 aa).

Positions 6 to 149 (GYRLNVGIVI…KRDVYRRAMK (144 aa)) constitute a Nudix hydrolase domain. A Nudix box motif is present at residues 38-59 (GGIDDGESPEQAMFRELYEEVG).

This sequence belongs to the Nudix hydrolase family. RppH subfamily. A divalent metal cation serves as cofactor.

Accelerates the degradation of transcripts by removing pyrophosphate from the 5'-end of triphosphorylated RNA, leading to a more labile monophosphorylated state that can stimulate subsequent ribonuclease cleavage. This is RNA pyrophosphohydrolase from Vibrio cholerae serotype O1 (strain ATCC 39315 / El Tor Inaba N16961).